A 109-amino-acid polypeptide reads, in one-letter code: Flagellar hook-basal body complex protein FliE (109 aa).

The disordered stretch occupies residues 1 to 38 (MQAIHNDKSLLSPFSELNTDNRTQREESGSTFKEQKGG). The span at 22 to 38 (RTQREESGSTFKEQKGG) shows a compositional bias: basic and acidic residues.

The protein belongs to the FliE family.

The protein resides in the bacterial flagellum basal body. The chain is Flagellar hook-basal body complex protein FliE from Helicobacter acinonychis (strain Sheeba).